We begin with the raw amino-acid sequence, 864 residues long: Alpha-glucosidase (864 aa).

Residues 1 to 22 form the signal peptide; that stretch reads MAKVSFIFVAIALITGNVLCQT. 3 N-linked (GlcNAc...) asparagine glycosylation sites follow: Asn187, Asn364, and Asn406. Asp430 acts as the Nucleophile in catalysis. Glu433 is a catalytic residue. N-linked (GlcNAc...) asparagine glycosylation is found at Asn466 and Asn500. Asp567 (proton donor) is an active-site residue. N-linked (GlcNAc...) asparagine glycosylation is found at Asn568 and Asn734.

This sequence belongs to the glycosyl hydrolase 31 family.

The catalysed reaction is Hydrolysis of terminal, non-reducing (1-&gt;4)-linked alpha-D-glucose residues with release of alpha-D-glucose.. Its function is as follows. Hydrolyzes not only malto-oligosaccharides but also soluble starch. This is Alpha-glucosidase from Mucor javanicus.